Consider the following 569-residue polypeptide: MLSVKQELLAALAGELEKLSPGSAGRAAFESPKVAAHGDFACTAAMQLAKPLKLNPRALGEQLKAALEATPAFARWVDAIEIAGPGFLNIRLKAAAKQEIVREVLSAGDRFGYQKDNGQRVLVEFVSANPTGPLHVGHGRQAALGDAICNLFSTQGWSVHREFYYNDAGVQIDTLTKSTQLRARGFKPGDECWPTDPENPASKTFYNGDYIQDIANDFLAKKTVKADDREFTANGDVEDYDNIRQFAVAYLRNEQDKDLQAFNLHFDQYYLESSLYTSGRVEATVNRLVEKGHTYEQDGALWLKSTDYGDDKDRVMRKKDGTYTYFVPDVAYHIAKWERGFAKVVNIQGTDHHGTIARVRAGLQAADVGIPQGYPDYVLHTMVRVVKGGKEVKIGKRAGSYVTLRDLIEWTSKDAVRFFLLSRKPDTEYTFDVDLAVAQNNDNPVYYVQYAHARIQSVLRAWAEAGGGDVASLKDVDLSALEGPQAQALMLQLAKYPEMLTAAAEGEAPHDVTFYLRDLAASYHSYYDAERILVDDEAVKRARLALVAATAQVLHNGLKVLGVDAPARM.

The 'HIGH' region signature appears at 128 to 138 (ANPTGPLHVGH).

It belongs to the class-I aminoacyl-tRNA synthetase family. In terms of assembly, monomer.

The protein localises to the cytoplasm. The catalysed reaction is tRNA(Arg) + L-arginine + ATP = L-arginyl-tRNA(Arg) + AMP + diphosphate. This is Arginine--tRNA ligase from Paracidovorax citrulli (strain AAC00-1) (Acidovorax citrulli).